We begin with the raw amino-acid sequence, 524 residues long: Cytokinin dehydrogenase 7 (524 aa).

In terms of domain architecture, FAD-binding PCMH-type spans 58–238 (NCVKPLAVVR…TRARVLLQPA (181 aa)). Residues A91, G93, N94, and G95 each contribute to the FAD site. Position 96 is a pros-8alpha-FAD histidine (H96). FAD contacts are provided by S97, Q101, D162, T167, S173, V177, I228, Y479, S514, and Q517.

The protein belongs to the oxygen-dependent FAD-linked oxidoreductase family. The cofactor is FAD. As to expression, expressed in the vasculature of roots, hypocotyls, cotyledons and leaves of young seedlings. In flowers, expressed in the transmitting tissue of the gynoecium prior to pollination. Expressed in the mature embryo sac with maximum activity in the egg cell and the synergids.

It is found in the cytoplasm. Its subcellular location is the cytosol. It carries out the reaction N(6)-dimethylallyladenine + A + H2O = 3-methyl-2-butenal + adenine + AH2. In terms of biological role, catalyzes the oxidation of cytokinins, a family of N(6)-substituted adenine derivatives that are plant hormones, where the substituent is an isopentenyl group. Catalyzes in vitro the oxidation of various types of cytokinin nucleotides that are known as direct products of cytokinin biosynthesis. In Arabidopsis thaliana (Mouse-ear cress), this protein is Cytokinin dehydrogenase 7 (CKX7).